Consider the following 674-residue polypeptide: Linear primary-alkylsulfatase (674 aa).

Residues 1–41 form the signal peptide; it reads MKLNALSTATHGSRSSPVKLWKFSTSFLLAASIIVSGQSWA. Zn(2+) is bound by residues histidine 192, histidine 194, aspartate 196, histidine 197, glutamate 303, and glutamate 322. Sulfate contacts are provided by residues 330–335 and arginine 340; that span reads NTYSLR. Histidine 367 provides a ligand contact to Zn(2+). Tyrosine 428 contacts sulfate.

It belongs to the metallo-beta-lactamase superfamily. Type III sulfatase family. In terms of assembly, homodimer. Requires Zn(2+) as cofactor.

The protein localises to the periplasm. The enzyme catalyses a primary linear alkyl sulfate ester + H2O = a primary alcohol + sulfate + H(+). With respect to regulation, inhibited by EDTA. Slightly activated in the presence of Ca(2+). Alkylsulfatase that cleaves primary alkyl sulfates such as sodium octyl sulfate and the widely used detergent sodium dodecyl sulfate (SDS). The sequence is that of Linear primary-alkylsulfatase from Pseudomonas sp.